A 100-amino-acid chain; its full sequence is Urease subunit gamma (100 aa).

This sequence belongs to the urease gamma subunit family. As to quaternary structure, heterotrimer of UreA (gamma), UreB (beta) and UreC (alpha) subunits. Three heterotrimers associate to form the active enzyme.

It localises to the cytoplasm. The enzyme catalyses urea + 2 H2O + H(+) = hydrogencarbonate + 2 NH4(+). It functions in the pathway nitrogen metabolism; urea degradation; CO(2) and NH(3) from urea (urease route): step 1/1. In Pseudomonas entomophila (strain L48), this protein is Urease subunit gamma.